Here is a 340-residue protein sequence, read N- to C-terminus: tRNA N6-adenosine threonylcarbamoyltransferase (340 aa).

Residues histidine 109 and histidine 113 each coordinate Fe cation. Substrate is bound by residues 132–136 (AISGA), aspartate 165, glycine 178, and asparagine 277. A Fe cation-binding site is contributed by aspartate 302.

It belongs to the KAE1 / TsaD family. Fe(2+) serves as cofactor.

The protein resides in the cytoplasm. The enzyme catalyses L-threonylcarbamoyladenylate + adenosine(37) in tRNA = N(6)-L-threonylcarbamoyladenosine(37) in tRNA + AMP + H(+). Required for the formation of a threonylcarbamoyl group on adenosine at position 37 (t(6)A37) in tRNAs that read codons beginning with adenine. Is involved in the transfer of the threonylcarbamoyl moiety of threonylcarbamoyl-AMP (TC-AMP) to the N6 group of A37, together with TsaE and TsaB. TsaD likely plays a direct catalytic role in this reaction. This Chlamydia muridarum (strain MoPn / Nigg) protein is tRNA N6-adenosine threonylcarbamoyltransferase.